The chain runs to 140 residues: Ribonuclease P protein component (140 aa).

Residues 115-140 are disordered; that stretch reads RCKPGAPKPPPFKKRPNKSVKSNKQT.

It belongs to the RnpA family. Consists of a catalytic RNA component (M1 or rnpB) and a protein subunit.

It carries out the reaction Endonucleolytic cleavage of RNA, removing 5'-extranucleotides from tRNA precursor.. In terms of biological role, RNaseP catalyzes the removal of the 5'-leader sequence from pre-tRNA to produce the mature 5'-terminus. It can also cleave other RNA substrates such as 4.5S RNA. The protein component plays an auxiliary but essential role in vivo by binding to the 5'-leader sequence and broadening the substrate specificity of the ribozyme. The protein is Ribonuclease P protein component of Pseudoalteromonas translucida (strain TAC 125).